The following is a 424-amino-acid chain: L-threonine:uridine-5'-aldehyde transaldolase (424 aa).

Lys235 bears the N6-(pyridoxal phosphate)lysine mark.

It belongs to the SHMT family. It depends on pyridoxal 5'-phosphate as a cofactor.

It carries out the reaction uridine-5'-aldehyde + L-threonine = (5'S,6'S)-C-glycyluridine + acetaldehyde. The protein operates within antibiotic biosynthesis. In terms of biological role, transaldolase involved in the biosynthesis of the lipopeptidyl nucleoside antibiotic A-90289. Catalyzes the condensation of L-threonine and uridine-5'-aldehyde to form 5'-C-glycyluridine (GlyU). Forms (5'S,6'S)-GlyU. Has no activity with alternative amino acids, such as glycine or serine. The polypeptide is L-threonine:uridine-5'-aldehyde transaldolase (Streptomyces sp).